A 397-amino-acid polypeptide reads, in one-letter code: T-box transcription factor TBX19 (397 aa).

The segment at residues 48-216 (LWQRFREVTN…YNPFAKAFLD (169 aa)) is a DNA-binding region (T-box). The segment at 220–248 (RNHPKDAPEAASEGQHMTYSHSPQAPHGC) is disordered.

The protein localises to the nucleus. May be involved in the initial formation of the chordamesoderm. This chain is T-box transcription factor TBX19, found in Gallus gallus (Chicken).